Here is a 172-residue protein sequence, read N- to C-terminus: Translation initiation factor IF-3 (172 aa).

This sequence belongs to the IF-3 family. In terms of assembly, monomer.

The protein localises to the cytoplasm. Functionally, IF-3 binds to the 30S ribosomal subunit and shifts the equilibrium between 70S ribosomes and their 50S and 30S subunits in favor of the free subunits, thus enhancing the availability of 30S subunits on which protein synthesis initiation begins. This Bartonella tribocorum (strain CIP 105476 / IBS 506) protein is Translation initiation factor IF-3.